A 251-amino-acid polypeptide reads, in one-letter code: Hydroxyacylglutathione hydrolase (251 aa).

H54, H56, D58, H59, H113, D140, and H178 together coordinate Zn(2+).

Belongs to the metallo-beta-lactamase superfamily. Glyoxalase II family. Monomer. Zn(2+) is required as a cofactor.

It catalyses the reaction an S-(2-hydroxyacyl)glutathione + H2O = a 2-hydroxy carboxylate + glutathione + H(+). It functions in the pathway secondary metabolite metabolism; methylglyoxal degradation; (R)-lactate from methylglyoxal: step 2/2. Its function is as follows. Thiolesterase that catalyzes the hydrolysis of S-D-lactoyl-glutathione to form glutathione and D-lactic acid. The polypeptide is Hydroxyacylglutathione hydrolase (Synechococcus sp. (strain CC9902)).